The primary structure comprises 520 residues: MLARGLPLRSALVKACPPLLNTGREGWGHHRVGTGEGAGISTRTPRPYSEIPSPGDNGWINLYHFWRKKSSQRIHFRHIENFQKYGPIYREKLGNLESVYIIHPEDVAHLFKFEGSYPQRYDIPPWLAYHQYYQKPIGVLFKKSGAWKKDRVVLNTEVMAPEAIKNFIPLLNPVSQDFVSLLRKRIQQQGSGKFAGDIKEDLFHFAFESITNVMFGERLGMLEDTVNTEAQKFIDAVYKMFHTSVPLLNLPPELYRLFRTKTWRDHVAAWDTIFNKAEKYTEIFYQDLRQKTEFRNYPGILYHLLKSEKMLLEDVKANITEMLAGGVDTTSMTLQWHLYEMARSLNVQEMLREEVLNARRQAEGDISKMLQMVPLLKASIKETLRLHPISVTLQRYPESDLVLQDYLIPAKTLVQVAIYAMGRDPAFFSNPDKFDPTRWLGKDKDLIHFRNLGFGWGVRQCVGRRIAELEMTLFLIHILENFKIEMQQIGDVNTIFNLILTPDKPIFLVFRPFNQDPPQA.

The N-terminal 39 residues, 1–39 (MLARGLPLRSALVKACPPLLNTGREGWGHHRVGTGEGAG), are a transit peptide targeting the mitochondrion. The segment at 27-48 (WGHHRVGTGEGAGISTRTPRPY) is disordered. Cys-461 lines the heme pocket.

It belongs to the cytochrome P450 family. Interacts with FDX1/adrenodoxin. Heme serves as cofactor.

It localises to the mitochondrion inner membrane. The catalysed reaction is 6 reduced [adrenodoxin] + cholesterol + 3 O2 + 6 H(+) = 4-methylpentanal + pregnenolone + 6 oxidized [adrenodoxin] + 4 H2O. It catalyses the reaction 2 reduced [adrenodoxin] + cholesterol + O2 + 2 H(+) = (22R)-hydroxycholesterol + 2 oxidized [adrenodoxin] + H2O. It carries out the reaction (22R)-hydroxycholesterol + 2 reduced [adrenodoxin] + O2 + 2 H(+) = (20R,22R)-20,22-dihydroxycholesterol + 2 oxidized [adrenodoxin] + H2O. The enzyme catalyses (20R,22R)-20,22-dihydroxycholesterol + 2 reduced [adrenodoxin] + O2 + 2 H(+) = 4-methylpentanal + pregnenolone + 2 oxidized [adrenodoxin] + 2 H2O. It participates in lipid metabolism; C21-steroid hormone metabolism. Its pathway is steroid metabolism; cholesterol metabolism. A cytochrome P450 monooxygenase that catalyzes the side-chain hydroxylation and cleavage of cholesterol to pregnenolone, the precursor of most steroid hormones. Catalyzes three sequential oxidation reactions of cholesterol, namely the hydroxylation at C22 followed with the hydroxylation at C20 to yield 20R,22R-hydroxycholesterol that is further cleaved between C20 and C22 to yield the C21-steroid pregnenolone and 4-methylpentanal. Mechanistically, uses molecular oxygen inserting one oxygen atom into a substrate and reducing the second into a water molecule. Two electrons are provided by NADPH via a two-protein mitochondrial transfer system comprising flavoprotein FDXR (adrenodoxin/ferredoxin reductase) and nonheme iron-sulfur protein FDX1 or FDX2 (adrenodoxin/ferredoxin). The protein is Cholesterol side-chain cleavage enzyme, mitochondrial of Capra hircus (Goat).